A 109-amino-acid polypeptide reads, in one-letter code: MIGKERIRIRLKAYDYRVLDQSTGEIVDTARRTGAQIAGPIPLPTVKNKYCVLRSPHVDKKSREAFEIRTHKRLLDILEPTQQTVDALMKLDLPAGVDVEIKAFGKEHK.

This sequence belongs to the universal ribosomal protein uS10 family. Part of the 30S ribosomal subunit.

Its function is as follows. Involved in the binding of tRNA to the ribosomes. In Koribacter versatilis (strain Ellin345), this protein is Small ribosomal subunit protein uS10.